The primary structure comprises 591 residues: DDB1- and CUL4-associated factor 8 (591 aa).

Positions Met1 to Leu14 are enriched in basic and acidic residues. A disordered region spans residues Met1–Ala140. A phosphoserine mark is found at Ser21 and Ser22. The Nuclear export signal signature appears at Ile39–Leu50. 2 stretches are compositionally biased toward basic and acidic residues: residues Arg65–Ser99 and Ser118–Glu131. A phosphoserine mark is found at Ser99, Ser123, and Ser124. WD repeat units lie at residues Gly185 to Asp224, Gly228 to Asn269, Gln275 to Lys315, Glu323 to Asn363, Glu379 to Tyr418, Arg426 to Phe466, and Asp470 to Leu509. Arg198 carries the post-translational modification Omega-N-methylarginine; by PRMT1. Residues His552–Ser591 are disordered.

This sequence belongs to the WD repeat DCAF8 family. As to quaternary structure, interacts with DDB1, CUL4A and CUL4B. Interacts with KPNA1, KPNB1 and XPO1.

The protein localises to the nucleus. It localises to the cytoplasm. It participates in protein modification; protein ubiquitination. In terms of biological role, may function as a substrate receptor for CUL4-DDB1 E3 ubiquitin-protein ligase complex. The protein is DDB1- and CUL4-associated factor 8 (Dcaf8) of Rattus norvegicus (Rat).